A 343-amino-acid polypeptide reads, in one-letter code: 2,3,4,5-tetrahydropyridine-2,6-dicarboxylate N-succinyltransferase (343 aa).

Glu-204 serves as a coordination point for Mg(2+). The active-site Acyl-anhydride intermediate is Glu-220. Succinyl-CoA is bound by residues Arg-222, Gly-237, Ser-240, Ala-263, 278–279, Gly-286, Lys-303, and 316–319; these read ES and RRNS.

It belongs to the type 2 tetrahydrodipicolinate N-succinyltransferase family. In terms of assembly, homotrimer.

The protein resides in the cytoplasm. The enzyme catalyses (S)-2,3,4,5-tetrahydrodipicolinate + succinyl-CoA + H2O = (S)-2-succinylamino-6-oxoheptanedioate + CoA. Its pathway is amino-acid biosynthesis; L-lysine biosynthesis via DAP pathway; LL-2,6-diaminopimelate from (S)-tetrahydrodipicolinate (succinylase route): step 1/3. In terms of biological role, catalyzes the conversion of the cyclic tetrahydrodipicolinate (THDP) into the acyclic N-succinyl-L-2-amino-6-oxopimelate using succinyl-CoA. This chain is 2,3,4,5-tetrahydropyridine-2,6-dicarboxylate N-succinyltransferase, found in Vibrio cholerae serotype O1 (strain ATCC 39315 / El Tor Inaba N16961).